Here is a 453-residue protein sequence, read N- to C-terminus: Glutamyl-tRNA reductase (453 aa).

Residues 49 to 52 (TCNR), serine 109, 114 to 116 (EQQ), and glutamine 120 contribute to the substrate site. Cysteine 50 functions as the Nucleophile in the catalytic mechanism. 191–196 (GAGSMG) is an NADP(+) binding site. Positions 432–453 (PAAVATPTDLVDGDRTGRDLQA) are disordered. Residues 443–453 (DGDRTGRDLQA) show a composition bias toward basic and acidic residues.

Belongs to the glutamyl-tRNA reductase family. Homodimer.

It catalyses the reaction (S)-4-amino-5-oxopentanoate + tRNA(Glu) + NADP(+) = L-glutamyl-tRNA(Glu) + NADPH + H(+). Its pathway is porphyrin-containing compound metabolism; protoporphyrin-IX biosynthesis; 5-aminolevulinate from L-glutamyl-tRNA(Glu): step 1/2. In terms of biological role, catalyzes the NADPH-dependent reduction of glutamyl-tRNA(Glu) to glutamate 1-semialdehyde (GSA). This is Glutamyl-tRNA reductase from Rhodococcus erythropolis (strain PR4 / NBRC 100887).